The sequence spans 999 residues: Probable hemoglobin and hemoglobin-haptoglobin-binding protein 4 (999 aa).

The signal sequence occupies residues 1-24 (MTNFRLNVLAYSVMLGLTASVAYA). Residues 25-52 (EPTNQPTNQPTNQPTNQPTNQPTNQNSN) are disordered. 6 repeat units span residues 26–29 (PTNQ), 30–33 (PTNQ), 34–37 (PTNQ), 38–41 (PTNQ), 42–45 (PTNQ), and 46–49 (PTNQ). The segment at 26–49 (PTNQPTNQPTNQPTNQPTNQPTNQ) is 6 X 4 AA tandem repeats of P-T-N-Q. A compositionally biased stretch (low complexity) spans 26–50 (PTNQPTNQPTNQPTNQPTNQPTNQN). The TonB box signature appears at 58-65 (EQINVLGS). Positions 68 to 195 (NNDNTPPKIA…LGGAVLFETK (128 aa)) constitute a TBDR plug domain. In terms of domain architecture, TBDR beta-barrel spans 203 to 999 (EKDWHIGYKA…NYKLSAEITF (797 aa)). The short motif at 982–999 (NRFYSPGRNYKLSAEITF) is the TonB C-terminal box element.

It belongs to the TonB-dependent receptor family. Hemoglobin/haptoglobin binding protein subfamily.

Its subcellular location is the cell outer membrane. Functionally, acts as a receptor for hemoglobin or the hemoglobin/haptoglobin complex of the human host and is required for heme uptake. The polypeptide is Probable hemoglobin and hemoglobin-haptoglobin-binding protein 4 (Haemophilus influenzae (strain ATCC 51907 / DSM 11121 / KW20 / Rd)).